The following is a 368-amino-acid chain: 4-hydroxy-3-methylbut-2-en-1-yl diphosphate synthase (flavodoxin) (368 aa).

Cys-271, Cys-274, Cys-306, and Glu-313 together coordinate [4Fe-4S] cluster.

This sequence belongs to the IspG family. [4Fe-4S] cluster is required as a cofactor.

The catalysed reaction is (2E)-4-hydroxy-3-methylbut-2-enyl diphosphate + oxidized [flavodoxin] + H2O + 2 H(+) = 2-C-methyl-D-erythritol 2,4-cyclic diphosphate + reduced [flavodoxin]. It participates in isoprenoid biosynthesis; isopentenyl diphosphate biosynthesis via DXP pathway; isopentenyl diphosphate from 1-deoxy-D-xylulose 5-phosphate: step 5/6. Functionally, converts 2C-methyl-D-erythritol 2,4-cyclodiphosphate (ME-2,4cPP) into 1-hydroxy-2-methyl-2-(E)-butenyl 4-diphosphate. This Haemophilus influenzae (strain 86-028NP) protein is 4-hydroxy-3-methylbut-2-en-1-yl diphosphate synthase (flavodoxin).